Here is a 435-residue protein sequence, read N- to C-terminus: 5-methylthioadenosine/S-adenosylhomocysteine deaminase (435 aa).

Zn(2+)-binding residues include histidine 65 and histidine 67. Substrate contacts are provided by glutamate 94, arginine 150, and histidine 189. Zn(2+) is bound at residue histidine 216. Substrate-binding residues include glutamate 219 and aspartate 304. Aspartate 304 serves as a coordination point for Zn(2+).

This sequence belongs to the metallo-dependent hydrolases superfamily. MTA/SAH deaminase family. Requires Zn(2+) as cofactor.

The enzyme catalyses S-adenosyl-L-homocysteine + H2O + H(+) = S-inosyl-L-homocysteine + NH4(+). The catalysed reaction is S-methyl-5'-thioadenosine + H2O + H(+) = S-methyl-5'-thioinosine + NH4(+). Functionally, catalyzes the deamination of 5-methylthioadenosine and S-adenosyl-L-homocysteine into 5-methylthioinosine and S-inosyl-L-homocysteine, respectively. Is also able to deaminate adenosine. The polypeptide is 5-methylthioadenosine/S-adenosylhomocysteine deaminase (Bacillus cereus (strain 03BB102)).